Reading from the N-terminus, the 500-residue chain is MNYFPWLTIIVVLPISAGSLIFFLPHRGNKVIRWYTICICVLELLLTTYAFCYHFQLDDPLVQLTEDYKWINFFDFYWRLGIDGLSIGPILLTGFITTLATLAAWPVTRDSRLFHFLMLAMYSGQIGSFSSRDLLLFFLMWELELIPVYLLLSMWGGKKRLYSATKFILYTAGGSIFLLIGVLGIGLYGSTEPTLNFETLTNQSYPIALEIIFYIGFLIAFAVKSPIIPLHTWLPDTHGEAHYSTCMLLAGILLKMGAYGLVRINMELLPHAHSLFSPWLVVVGTMQIIYAASTSSGQRNLKKRIAYSSVSHMGFIIIGIGSITDPGLNGAILQIVSHGFIGAALFFLAGTSYDRIRLVYLDEMGGMAISMPKIFTMFSILSMASLALPGMSGFVAELIVFFGIITSQKYFLMAKILITFVMAIGMILTPIYSLSMSRQMFYGYKLINAQNFSFFDSGPRELFVSISILLPVIGIGIYPDFLLSLSSDKVEAILSNYFNR.

14 helical membrane passes run 4–24, 37–57, 87–107, 113–130, 134–154, 167–187, 207–227, 242–262, 272–292, 305–325, 330–350, 386–406, 411–431, and 462–482; these read FPWL…IFFL, ICIC…HFQL, IGPI…AWPV, LFHF…GSFS, LLLF…LLSM, FILY…GIGL, IALE…KSPI, HYST…YGLV, AHSL…IYAA, IAYS…SITD, GAIL…FLAG, LALP…GIIT, FLMA…LTPI, and LFVS…PDFL.

Belongs to the complex I subunit 4 family.

It localises to the plastid. It is found in the chloroplast thylakoid membrane. It catalyses the reaction a plastoquinone + NADH + (n+1) H(+)(in) = a plastoquinol + NAD(+) + n H(+)(out). The catalysed reaction is a plastoquinone + NADPH + (n+1) H(+)(in) = a plastoquinol + NADP(+) + n H(+)(out). The polypeptide is NAD(P)H-quinone oxidoreductase chain 4, chloroplastic (Carica papaya (Papaya)).